The sequence spans 120 residues: uncharacterized protein (120 aa).

Residues 3-120 enclose the N-acetyltransferase domain; the sequence is IRYKKAFEKI…EKCEICHGSE (118 aa).

This is an uncharacterized protein from Bacillus methanolicus.